Consider the following 113-residue polypeptide: Large ribosomal subunit protein bL19m (113 aa).

The protein belongs to the bacterial ribosomal protein bL19 family.

It localises to the mitochondrion. The chain is Large ribosomal subunit protein bL19m (RPL19) from Reclinomonas americana.